Consider the following 418-residue polypeptide: Pyruvate kinase isozyme G, chloroplastic (418 aa).

K(+) is bound by residues D14 and T15. R21 serves as a coordination point for ATP. E165 contacts Mg(2+). G188, D189, and T221 together coordinate substrate. Residue D189 coordinates Mg(2+).

The protein belongs to the pyruvate kinase family. Requires Mg(2+) as cofactor. K(+) is required as a cofactor. Expressed in developing and germinating endosperm and in roots.

It is found in the plastid. The protein localises to the chloroplast. It carries out the reaction pyruvate + ATP = phosphoenolpyruvate + ADP + H(+). It functions in the pathway carbohydrate degradation; glycolysis; pyruvate from D-glyceraldehyde 3-phosphate: step 5/5. This Ricinus communis (Castor bean) protein is Pyruvate kinase isozyme G, chloroplastic.